The sequence spans 495 residues: Sugar phosphate exchanger 3 (495 aa).

A helical transmembrane segment spans residues 16-36; that stretch reads FSHHHMVVFLLTFFSYSLLHA. Asparagine 58 carries an N-linked (GlcNAc...) asparagine glycan. 5 helical membrane-spanning segments follow: residues 82–102, 114–134, 148–168, 178–198, and 210–230; these read TLFLGMLDTIFLFSYAVGLFI, WVLSFGMCSSALVVFVFGTLT, LWIVNGLLQSTGWPCVVAVMG, VVFGLWSACASVGNILGACLA, and FLVTAAVQFAGGIIIFFGLLV. N-linked (GlcNAc...) asparagine glycosylation occurs at asparagine 267. 6 helical membrane passes run 298-318, 334-354, 358-378, 387-407, 429-449, and 453-473; these read LAYACLKLVNYSFFFWLPFYL, IWYDVGGIIGGTLQGFISDML, APVLALSLLLAIGSLVGYSRS, LLMAVTGFFIGGPSNMISSAI, GIVDGTGSIGAAVGQYLVSLI, and LGWMWVFYFFILMTSCTVLFI.

The protein belongs to the major facilitator superfamily. Organophosphate:Pi antiporter (OPA) (TC 2.A.1.4) family. Interacts with ATRAID; the interaction is direct and both proteins are mutually dependent for their stability. Post-translationally, glycosylated.

It localises to the endoplasmic reticulum membrane. The protein localises to the lysosome membrane. Its function is as follows. Unlike the other SLC37 members, lacks glucose-6-phosphate antiporter activity. In osteoclasts, forms a transporter complex with ATRAID for nitrogen-containing-bisphophonates (N-BPs) required for releasing N-BP molecules that have trafficked to lysosomes through fluid-phase endocytosis into the cytosol. The sequence is that of Sugar phosphate exchanger 3 (SLC37A3) from Bos taurus (Bovine).